Here is a 121-residue protein sequence, read N- to C-terminus: MKIVISKPDKNKIRQKRHRRVRGKLSGTADRPRLNVFRSNTGIYAQVIDDVAGVTLASASTLDKEVSKGTKTEQAVVVGKLVAERAVAKGISEVVFDRGGYLYHGRVKALADAARENGLKF.

The protein belongs to the universal ribosomal protein uL18 family. Part of the 50S ribosomal subunit; part of the 5S rRNA/L5/L18/L25 subcomplex. Contacts the 5S and 23S rRNAs.

This is one of the proteins that bind and probably mediate the attachment of the 5S RNA into the large ribosomal subunit, where it forms part of the central protuberance. The protein is Large ribosomal subunit protein uL18 of Streptococcus equi subsp. zooepidemicus (strain MGCS10565).